Consider the following 130-residue polypeptide: Small ribosomal subunit protein uS8 (130 aa).

Belongs to the universal ribosomal protein uS8 family. Part of the 30S ribosomal subunit. Contacts proteins S5 and S12.

One of the primary rRNA binding proteins, it binds directly to 16S rRNA central domain where it helps coordinate assembly of the platform of the 30S subunit. This Edwardsiella ictaluri (strain 93-146) protein is Small ribosomal subunit protein uS8.